The sequence spans 130 residues: Small ribosomal subunit protein uS9 (130 aa).

Belongs to the universal ribosomal protein uS9 family.

The chain is Small ribosomal subunit protein uS9 from Albidiferax ferrireducens (strain ATCC BAA-621 / DSM 15236 / T118) (Rhodoferax ferrireducens).